We begin with the raw amino-acid sequence, 410 residues long: Class E basic helix-loop-helix protein 41 (410 aa).

Lysine 31 participates in a covalent cross-link: Glycyl lysine isopeptide (Lys-Gly) (interchain with G-Cter in SUMO2). A bHLH domain is found at 44–99 (TYKLPHRLIEKKRRDRINECIAQLKDLLPEHLKLTTLGHLEKAVVLELTLKHLKAL). A Glycyl lysine isopeptide (Lys-Gly) (interchain with G-Cter in SUMO2) cross-link involves residue lysine 121. The region spanning 131–166 (FHSGFQTCAKEVLQYLARFESWTPREPRCAQLVSHL) is the Orange domain. Disordered regions lie at residues 209–251 (IQRT…SAAP) and 371–410 (EVAPPGSLRPQHAHSRTHLPHAVNPESSQEDATQPAKDAP). Lysine 240 is covalently cross-linked (Glycyl lysine isopeptide (Lys-Gly) (interchain with G-Cter in SUMO2)).

In terms of assembly, homodimer. Heterodimer with BHLHE40/DEC1. Interacts with CIART. Interacts with BMAL1 and RXRA. Interacts with NR0B2 and HNF1A. In terms of tissue distribution, highly expressed in the caudate putamen, pineal gland, granular cell layer of the cerebellum, olfactory bulb, piriform cortex, hippocampus and hypothalamic nuclei. Moderately expressed in skeletal muscle, heart. Weakly expressed in lung.

The protein localises to the nucleus. Its function is as follows. Transcriptional repressor involved in the regulation of the circadian rhythm by negatively regulating the activity of the clock genes and clock-controlled genes. Acts as the negative limb of a novel autoregulatory feedback loop (DEC loop) which differs from the one formed by the PER and CRY transcriptional repressors (PER/CRY loop). Both these loops are interlocked as it represses the expression of PER1 and in turn is repressed by PER1/2 and CRY1/2. Represses the activity of the circadian transcriptional activator: CLOCK-BMAL1 heterodimer by competing for the binding to E-box elements (5'-CACGTG-3') found within the promoters of its target genes. Negatively regulates its own expression and the expression of DBP and BHLHE41/DEC2. Acts as a corepressor of RXR and the RXR-LXR heterodimers and represses the ligand-induced RXRA/B/G, NR1H3/LXRA, NR1H4 and VDR transactivation activity. Inhibits HNF1A-mediated transactivation of CYP1A2, CYP2E1 and CYP3A11. The polypeptide is Class E basic helix-loop-helix protein 41 (Bhlhb3) (Rattus norvegicus (Rat)).